A 630-amino-acid polypeptide reads, in one-letter code: 1-deoxy-D-xylulose-5-phosphate synthase (630 aa).

Thiamine diphosphate contacts are provided by residues His74 and 115–117 (GHA). Mg(2+) is bound at residue Asp146. Thiamine diphosphate-binding positions include 147–148 (AA), Asn175, Phe284, and Glu364. Asn175 lines the Mg(2+) pocket.

Belongs to the transketolase family. DXPS subfamily. As to quaternary structure, homodimer. Mg(2+) serves as cofactor. The cofactor is thiamine diphosphate.

The enzyme catalyses D-glyceraldehyde 3-phosphate + pyruvate + H(+) = 1-deoxy-D-xylulose 5-phosphate + CO2. It participates in metabolic intermediate biosynthesis; 1-deoxy-D-xylulose 5-phosphate biosynthesis; 1-deoxy-D-xylulose 5-phosphate from D-glyceraldehyde 3-phosphate and pyruvate: step 1/1. Functionally, catalyzes the acyloin condensation reaction between C atoms 2 and 3 of pyruvate and glyceraldehyde 3-phosphate to yield 1-deoxy-D-xylulose-5-phosphate (DXP). This is 1-deoxy-D-xylulose-5-phosphate synthase from Methylacidiphilum infernorum (isolate V4) (Methylokorus infernorum (strain V4)).